The following is a 194-amino-acid chain: Naphthalene 1,2-dioxygenase system, small oxygenase component (194 aa).

This sequence belongs to the bacterial ring-hydroxylating dioxygenase beta subunit family. In terms of assembly, the naphthalene dioxygenase (NDO) multicomponent enzyme system is composed of an electron transfer component and a dioxygenase component (iron sulfur protein (ISP)). The electron transfer component is composed of a ferredoxin reductase (NagAa) and a ferredoxin (NagAb), and the dioxygenase component is formed by a large alpha subunit (NagAc) and a small beta subunit (NagAd).

It functions in the pathway aromatic compound metabolism; naphthalene degradation. Component of the naphthalene dioxygenase (NDO) multicomponent enzyme system which catalyzes the incorporation of both atoms of molecular oxygen into naphthalene to form cis-(1R,2S)-dihydroxy-1,2-dihydronaphthalene. Also able to use styrene as substrate. The beta subunit seems to have a structural role in the holoenzyme. In Ralstonia sp, this protein is Naphthalene 1,2-dioxygenase system, small oxygenase component.